A 68-amino-acid polypeptide reads, in one-letter code: Toxin Cg2 (68 aa).

Positions 1–66 constitute an LCN-type CS-alpha/beta domain; the sequence is KDGYLVNKST…VYPIPGKTCS (66 aa). Disulfide bonds link C12–C65, C16–C41, C25–C46, and C29–C48.

Belongs to the long (4 C-C) scorpion toxin superfamily. Sodium channel inhibitor family. Expressed by the venom gland.

The protein localises to the secreted. Its function is as follows. Binds to sodium channels (Nav) and inhibits them. In Centruroides gracilis (Slenderbrown scorpion), this protein is Toxin Cg2.